Consider the following 353-residue polypeptide: Putative glycosyltransferase TagX (353 aa).

Belongs to the glycosyltransferase 2 family.

This Staphylococcus aureus (strain Mu50 / ATCC 700699) protein is Putative glycosyltransferase TagX (tagX).